A 105-amino-acid chain; its full sequence is MCLTTSEPPFPDTDTPTMRSASYHIKHKSKTQTHLRILNLTRRRRLLKEQKEMEMRNLKLFVENQSIIRENEALKKKALLLHHENNALFALLHPKYSPVSTSLLQ.

The segment at 1 to 20 (MCLTTSEPPFPDTDTPTMRS) is disordered. The stretch at 39–60 (NLTRRRRLLKEQKEMEMRNLKL) forms a coiled coil.

In terms of assembly, interacts with REV.

Functionally, competitive inhibitor of the HD-ZIPIII transcription factors in shoot apical meristem (SAM) development. Acts by forming non-functional heterodimers. Part of a negative feedback loop. Essential for proper functioning of stem cells in the SAM. This chain is Protein LITTLE ZIPPER 2, found in Arabidopsis thaliana (Mouse-ear cress).